Consider the following 130-residue polypeptide: MSKPRIALIAHDAKKDEIVALAGQYRETLAQCRLVATGTTGGRIAAAHGLEVERKLSGPLGGDLQIGAEFADGRVDIVVFLRDPMTAQPHDPDITALVRACDVHDVPVATNVATARMLLDDLARNMQDVC.

Residues 1-130 enclose the MGS-like domain; the sequence is MSKPRIALIA…DLARNMQDVC (130 aa). Residues histidine 11, lysine 15, 37–40, and 57–58 each bind substrate; these read TGTT and SG. The active-site Proton donor/acceptor is the aspartate 63. Position 90 (histidine 90) interacts with substrate.

The protein belongs to the methylglyoxal synthase family.

It carries out the reaction dihydroxyacetone phosphate = methylglyoxal + phosphate. Catalyzes the formation of methylglyoxal from dihydroxyacetone phosphate. The sequence is that of Methylglyoxal synthase from Burkholderia orbicola (strain AU 1054).